Consider the following 1062-residue polypeptide: Zinc finger protein swm (1062 aa).

In terms of domain architecture, PWI spans 7–75 (DKLKDWLSVV…ERLFDAIASE (69 aa)). Disordered stretches follow at residues 119-145 (ADSP…QASQ) and 171-340 (KPAF…PDRV). The span at 134–145 (DSNQVKLEQASQ) shows a compositional bias: polar residues. The segment covering 172–182 (PAFDHKTKDSH) has biased composition (basic and acidic residues). Over residues 197–207 (SASPPGRSSGV) the composition is skewed to low complexity. Positions 208–220 (SGSGGGGPGGAGL) are enriched in gly residues. The span at 234 to 249 (SRRRRASLRSRSRSRS) shows a compositional bias: basic residues. Composition is skewed to basic and acidic residues over residues 264–273 (RRVNEREKTQ) and 294–310 (RNFD…DRPR). Residues 322 to 340 (RSMSPERNARRNQNSPDRV) show a composition bias toward polar residues. A C3H1-type zinc finger spans residues 363-391 (SHPRQRCRDFDEKGYCVRGETCPWDHGVN). A disordered region spans residues 416–463 (EIWARSGGPPPGAGQGPVPPPTQPGQTTINPFSGNVRPTTLMSGSGPS). Positions 423 to 438 (GPPPGAGQGPVPPPTQ) are enriched in pro residues. The span at 444-461 (INPFSGNVRPTTLMSGSG) shows a compositional bias: polar residues. An RRM domain is found at 561 to 635 (SSLELRKVPR…RFIKVFWHND (75 aa)). Disordered stretches follow at residues 666–704 (NVPA…QANT), 716–741 (TTTA…LNPA), 822–847 (QDQL…KEQQ), 886–920 (SAAN…PTRV), and 1004–1062 (APVE…SWRR). The span at 721-733 (GSAGGAAGAGAPG) shows a compositional bias: gly residues. Residues 823–840 (DQLQAQMQQQQQQQQPPV) show a composition bias toward low complexity. The segment covering 1018–1037 (SLENPKQLIQSVSESESLLG) has biased composition (polar residues). Positions 1046–1056 (LEDEEEDEESE) are enriched in acidic residues.

It localises to the nucleus. Its function is as follows. Negatively regulates Hedgehog (hh) protein signal in wing development. Regulates neural-specific glycosylation by binding to FucTA mRNA and facilitating its nuclear export in neural cells. This chain is Zinc finger protein swm, found in Drosophila melanogaster (Fruit fly).